Reading from the N-terminus, the 399-residue chain is Tyrosine--tRNA ligase (399 aa).

A 'HIGH' region motif is present at residues 42-51 (PTAPDLHLGH). The 'KMSKS' region motif lies at 226-230 (KMSKS). Residue K229 participates in ATP binding. An S4 RNA-binding domain is found at 337-398 (LPVFQVVKQA…GKRKFASVVL (62 aa)).

This sequence belongs to the class-I aminoacyl-tRNA synthetase family. TyrS type 2 subfamily. Homodimer.

Its subcellular location is the cytoplasm. The catalysed reaction is tRNA(Tyr) + L-tyrosine + ATP = L-tyrosyl-tRNA(Tyr) + AMP + diphosphate + H(+). Catalyzes the attachment of tyrosine to tRNA(Tyr) in a two-step reaction: tyrosine is first activated by ATP to form Tyr-AMP and then transferred to the acceptor end of tRNA(Tyr). The chain is Tyrosine--tRNA ligase from Aromatoleum aromaticum (strain DSM 19018 / LMG 30748 / EbN1) (Azoarcus sp. (strain EbN1)).